A 167-amino-acid polypeptide reads, in one-letter code: Mediator of RNA polymerase II transcription subunit 10 (167 aa).

Over residues 141 to 158 (TGGRTVGGEGEGAGQGEG) the composition is skewed to gly residues. Residues 141–167 (TGGRTVGGEGEGAGQGEGGEGRGEGGN) form a disordered region.

Belongs to the Mediator complex subunit 10 family. As to quaternary structure, component of the Mediator complex.

It localises to the nucleus. Functionally, component of the Mediator complex, a coactivator involved in the regulated transcription of nearly all RNA polymerase II-dependent genes. Mediator functions as a bridge to convey information from gene-specific regulatory proteins to the basal RNA polymerase II transcription machinery. Mediator is recruited to promoters by direct interactions with regulatory proteins and serves as a scaffold for the assembly of a functional preinitiation complex with RNA polymerase II and the general transcription factors. This Chaetomium globosum (strain ATCC 6205 / CBS 148.51 / DSM 1962 / NBRC 6347 / NRRL 1970) (Soil fungus) protein is Mediator of RNA polymerase II transcription subunit 10 (NUT2).